A 302-amino-acid chain; its full sequence is Sulfate adenylyltransferase subunit 2 (302 aa).

The protein belongs to the PAPS reductase family. CysD subfamily. As to quaternary structure, heterodimer composed of CysD, the smaller subunit, and CysN.

It catalyses the reaction sulfate + ATP + H(+) = adenosine 5'-phosphosulfate + diphosphate. It participates in sulfur metabolism; hydrogen sulfide biosynthesis; sulfite from sulfate: step 1/3. Its function is as follows. With CysN forms the ATP sulfurylase (ATPS) that catalyzes the adenylation of sulfate producing adenosine 5'-phosphosulfate (APS) and diphosphate, the first enzymatic step in sulfur assimilation pathway. APS synthesis involves the formation of a high-energy phosphoric-sulfuric acid anhydride bond driven by GTP hydrolysis by CysN coupled to ATP hydrolysis by CysD. In Xanthomonas euvesicatoria pv. vesicatoria (strain 85-10) (Xanthomonas campestris pv. vesicatoria), this protein is Sulfate adenylyltransferase subunit 2.